The following is a 161-amino-acid chain: Small ribosomal subunit protein bS16 (161 aa).

Residues E114 to S161 are disordered. Residues P124–A133 show a composition bias toward basic residues.

It belongs to the bacterial ribosomal protein bS16 family.

In Mycobacterium marinum (strain ATCC BAA-535 / M), this protein is Small ribosomal subunit protein bS16.